A 969-amino-acid polypeptide reads, in one-letter code: MSFALGQRWISDTESDLGLGTVVAVDDRTVSVLFAASEENRLYAKHDAPITRVTFNKGDTIESHEGWSLEVEDVIEDGGLLTYIGTRTDTDEVNVVLRETLLSHQIRFNKPQDKLFAGQIDRMDRFALRFRALQNQYEQHKNPMRGLCGMRAGLIPHQLFIAHEVGRRYAPRVLLADEVGLGKTIEAGMIIHQQVLSGRAERVLIVVPETLQHQWLVEMMRRFNLHFSIFDEERCIESYADSENPFDTAQLVLCSLDFIRRSKRRFEQVVEADWDLLVVDEAHHLEWNQTKPSRAYQVIEAIAEETAGVLLLTATPEQLGHESHFARLRLLDPDRFYDYDAFVEEERQYQPVADAVTALMSGDKLSNDAKNRIAELLSEQDVEPLFRIIESDGSEEQQSQVRQELVDNLMDRHGTGRVLFRNTRAAIKGFPQRNLNLMPMALPPQYATSMRVATMMGGRMSNEARAMKMLYPEEIFQEFEGDSATWWQFDPRVNWLLELLKENRNEKVLIIASRASTALQLEQALREREGIRGTVFHEGMSIIERDKAAAYFAQEEGGAQVLICSEIGSEGRNFQFANQLVMFDLPFNPDLLEQRIGRLDRIGQKRDIDIHVPYLQGTSQELLARWFDEGLNAFGETCPTGRAVYEKFSDTIIAILATGKSDGLEPLIEESAALNKELKAQLEQGRDRLLEVHSNGGNKAKELAEKIAATDGDIHLVNFALNLFDTIGLNQDDKGENAIVVTPAENMLVSSYPGLPYEGCTITFDRKTALSREDMNLISWEHPMIQGGIDLVLTEGVGATAVSLLKNKALPAGTLLLELIYVVDAQAPKKSGIGRFLPKTPIRLMMDSKGNDLSAQVEFESFNRQLSPVNRHMASKLVNSVQKEIHALIDTAEVSIEDRIEAVRVDANAEMKTALNGELDRLQALKAVNPNIRDEELTQIETQMSELSAYIGKAQVQLDSLRLIVVSHN.

The region spanning 164-334 (EVGRRYAPRV…FARLRLLDPD (171 aa)) is the Helicase ATP-binding domain. ATP is bound at residue 177-184 (DEVGLGKT). Positions 280-283 (DEAH) match the DEAH box motif. The Helicase C-terminal domain occupies 492–672 (RVNWLLELLK…GLEPLIEESA (181 aa)).

It belongs to the SNF2/RAD54 helicase family. RapA subfamily. In terms of assembly, interacts with the RNAP. Has a higher affinity for the core RNAP than for the holoenzyme. Its ATPase activity is stimulated by binding to RNAP.

Functionally, transcription regulator that activates transcription by stimulating RNA polymerase (RNAP) recycling in case of stress conditions such as supercoiled DNA or high salt concentrations. Probably acts by releasing the RNAP, when it is trapped or immobilized on tightly supercoiled DNA. Does not activate transcription on linear DNA. Probably not involved in DNA repair. The protein is RNA polymerase-associated protein RapA of Aliivibrio salmonicida (strain LFI1238) (Vibrio salmonicida (strain LFI1238)).